The sequence spans 940 residues: Isoleucine--tRNA ligase (940 aa).

The short motif at 58–68 (PYANGDIHIGH) is the 'HIGH' region element. Glu564 serves as a coordination point for L-isoleucyl-5'-AMP. The short motif at 605-609 (KMSKS) is the 'KMSKS' region element. Lys608 is a binding site for ATP. Zn(2+) contacts are provided by Cys903, Cys906, Cys923, and Cys926.

It belongs to the class-I aminoacyl-tRNA synthetase family. IleS type 1 subfamily. As to quaternary structure, monomer. Zn(2+) serves as cofactor.

The protein localises to the cytoplasm. The enzyme catalyses tRNA(Ile) + L-isoleucine + ATP = L-isoleucyl-tRNA(Ile) + AMP + diphosphate. Catalyzes the attachment of isoleucine to tRNA(Ile). As IleRS can inadvertently accommodate and process structurally similar amino acids such as valine, to avoid such errors it has two additional distinct tRNA(Ile)-dependent editing activities. One activity is designated as 'pretransfer' editing and involves the hydrolysis of activated Val-AMP. The other activity is designated 'posttransfer' editing and involves deacylation of mischarged Val-tRNA(Ile). The chain is Isoleucine--tRNA ligase from Shewanella halifaxensis (strain HAW-EB4).